Here is a 274-residue protein sequence, read N- to C-terminus: Ribosomal RNA small subunit methyltransferase A (274 aa).

The S-adenosyl-L-methionine site is built by Asn-17, Leu-19, Gly-44, Glu-65, Asp-89, and Asn-111.

This sequence belongs to the class I-like SAM-binding methyltransferase superfamily. rRNA adenine N(6)-methyltransferase family. RsmA subfamily.

It is found in the cytoplasm. It catalyses the reaction adenosine(1518)/adenosine(1519) in 16S rRNA + 4 S-adenosyl-L-methionine = N(6)-dimethyladenosine(1518)/N(6)-dimethyladenosine(1519) in 16S rRNA + 4 S-adenosyl-L-homocysteine + 4 H(+). Its function is as follows. Specifically dimethylates two adjacent adenosines (A1518 and A1519) in the loop of a conserved hairpin near the 3'-end of 16S rRNA in the 30S particle. May play a critical role in biogenesis of 30S subunits. The chain is Ribosomal RNA small subunit methyltransferase A from Buchnera aphidicola subsp. Schizaphis graminum (strain Sg).